A 158-amino-acid chain; its full sequence is Large ribosomal subunit protein eL20z (158 aa).

This sequence belongs to the eukaryotic ribosomal protein eL20 family.

This chain is Large ribosomal subunit protein eL20z (RPL18A1), found in Arabidopsis thaliana (Mouse-ear cress).